An 815-amino-acid chain; its full sequence is Protein-glutamine gamma-glutamyltransferase K (815 aa).

Disordered regions lie at residues 1-40 (MDGP…RRGG) and 59-100 (DDWG…AAGD). The span at 16–25 (WQPPTTPSPE) shows a compositional bias: pro residues. Phosphothreonine is present on T21. Phosphoserine occurs at positions 23, 80, 83, 90, and 93. Residues 59–87 (DDWGPEPHRDRGSGSGRRRPDSRGSDSRR) show a composition bias toward basic and acidic residues. Active-site residues include C375, H434, and D457. Ca(2+) contacts are provided by N497, D499, E546, and E551. Residues 795–815 (SNAGGNSPLGETIPMASRGGA) are disordered.

Belongs to the transglutaminase superfamily. Transglutaminase family. In terms of assembly, interacts with PLAAT4. Ca(2+) is required as a cofactor. Palmitoylated. In terms of processing, the membrane anchorage region possesses a cluster of five cysteines within which fatty acid(s) may become thioester-linked. It is subject to phorbol ester-stimulated phosphorylation and is hypersensitive to proteolysis, which releases the enzyme in a soluble form. Post-translationally, tyrosine-phosphorylated.

It is found in the membrane. It catalyses the reaction L-glutaminyl-[protein] + L-lysyl-[protein] = [protein]-L-lysyl-N(6)-5-L-glutamyl-[protein] + NH4(+). In terms of biological role, catalyzes the cross-linking of proteins and the conjugation of polyamines to proteins. Responsible for cross-linking epidermal proteins during formation of the stratum corneum. Involved in cell proliferation. This is Protein-glutamine gamma-glutamyltransferase K (TGM1) from Canis lupus familiaris (Dog).